Here is a 690-residue protein sequence, read N- to C-terminus: Protein arginine N-methyltransferase 7 (690 aa).

SAM-dependent MTase PRMT-type domains lie at 14 to 357 (QNSW…YSLW) and 366 to 690 (TKSV…QKKL).

This sequence belongs to the class I-like SAM-binding methyltransferase superfamily. Protein arginine N-methyltransferase family. PRMT7 subfamily.

Essential arginine methyltransferase that can both catalyze the formation of omega-N monomethylarginine (MMA) and symmetrical dimethylarginine (sDMA). Specifically mediates the symmetrical dimethylation of arginine residues in the small nuclear ribonucleoproteins SmD1 and SmD3. The protein is Protein arginine N-methyltransferase 7 (Art7) of Drosophila sechellia (Fruit fly).